A 378-amino-acid chain; its full sequence is Protein KlaB (378 aa).

Belongs to the TelA family.

Functionally, belongs to the kla operon, which is associated with cryptic tellurite resistance, and IncW plasmid fertility inhibition. In Escherichia coli, this protein is Protein KlaB (klaB).